The chain runs to 274 residues: 4-diphosphocytidyl-2-C-methyl-D-erythritol kinase (274 aa).

Residue K10 is part of the active site. ATP is bound at residue 101–111; sequence PTQAGLGGGSA. D143 is an active-site residue.

This sequence belongs to the GHMP kinase family. IspE subfamily.

The enzyme catalyses 4-CDP-2-C-methyl-D-erythritol + ATP = 4-CDP-2-C-methyl-D-erythritol 2-phosphate + ADP + H(+). The protein operates within isoprenoid biosynthesis; isopentenyl diphosphate biosynthesis via DXP pathway; isopentenyl diphosphate from 1-deoxy-D-xylulose 5-phosphate: step 3/6. Its function is as follows. Catalyzes the phosphorylation of the position 2 hydroxy group of 4-diphosphocytidyl-2C-methyl-D-erythritol. In Helicobacter pylori (strain J99 / ATCC 700824) (Campylobacter pylori J99), this protein is 4-diphosphocytidyl-2-C-methyl-D-erythritol kinase.